Here is a 344-residue protein sequence, read N- to C-terminus: Biotin synthase (344 aa).

The Radical SAM core domain occupies 36-260 (NQIQISTLLS…MMPTSYIRLS (225 aa)). The [4Fe-4S] cluster site is built by cysteine 51, cysteine 55, and cysteine 58. Residues cysteine 95, cysteine 126, cysteine 186, and arginine 258 each coordinate [2Fe-2S] cluster.

It belongs to the radical SAM superfamily. Biotin synthase family. As to quaternary structure, homodimer. [4Fe-4S] cluster is required as a cofactor. [2Fe-2S] cluster serves as cofactor.

The enzyme catalyses (4R,5S)-dethiobiotin + (sulfur carrier)-SH + 2 reduced [2Fe-2S]-[ferredoxin] + 2 S-adenosyl-L-methionine = (sulfur carrier)-H + biotin + 2 5'-deoxyadenosine + 2 L-methionine + 2 oxidized [2Fe-2S]-[ferredoxin]. The protein operates within cofactor biosynthesis; biotin biosynthesis; biotin from 7,8-diaminononanoate: step 2/2. Catalyzes the conversion of dethiobiotin (DTB) to biotin by the insertion of a sulfur atom into dethiobiotin via a radical-based mechanism. The sequence is that of Biotin synthase from Buchnera aphidicola subsp. Baizongia pistaciae (strain Bp).